The primary structure comprises 501 residues: ATP-dependent rRNA helicase RRP3 (501 aa).

The stretch at 3-44 (KIVKRKEKKANDELTSLAEKIRAKALENQKKLIEAEKEGGSE) forms a coiled coil. Residues 36–79 (EAEKEGGSESDSEEDATAEKKKVLKSKSKSTVSTQNENTNEDES) form a disordered region. A phosphoserine mark is found at serine 43, serine 45, and serine 47. The Q motif motif lies at 81 to 109 (ESFSELNLVPELIQACKNLNYSKPTPIQS). In terms of domain architecture, Helicase ATP-binding spans 112 to 284 (IPPALEGHDI…RASLTNPVKC (173 aa)). 125–132 (AQTGSGKT) serves as a coordination point for ATP. The short motif at 231 to 234 (DEAD) is the DEAD box element. One can recognise a Helicase C-terminal domain in the interval 307-461 (LKNTYLIYLL…NIILTLRDSV (155 aa)). Residues 480 to 501 (IARGKGRRGRMMTRENMDMGER) form a disordered region. A compositionally biased stretch (basic and acidic residues) spans 491 to 501 (MTRENMDMGER).

The protein belongs to the DEAD box helicase family. DDX47/RRP3 subfamily. Interacts with the SSU processome.

The protein localises to the nucleus. The enzyme catalyses ATP + H2O = ADP + phosphate + H(+). Its function is as follows. ATP-dependent rRNA helicase required for pre-ribosomal RNA processing. Involved in the maturation of the 35S-pre-rRNA and to its cleavage to mature 18S rRNA. In Saccharomyces cerevisiae (strain YJM789) (Baker's yeast), this protein is ATP-dependent rRNA helicase RRP3.